Here is a 562-residue protein sequence, read N- to C-terminus: MEKVWLKRYPADVPAEIDPDRYSSLIEMFENAALRYADQPAFINMGEVMTFRKLEERSRAFAAYLQQGLGLQKGDRVALMMPNLLQYPIALFGVLRAGMIVVNVNPLYTPRELEHQLSDSGAVAIVIVSNFAHTLEKVVFKTQVRHVILTRMGDQLSAAKGTLVNFVVKYIKRLVPKYYLPDAISFRTVLQKGRRMQYVKPDVINTDTAFLQYTGGTTGVAKGAILTHRNMQSNLEQAKAAYAPLLQPGRDLVVTALPLYHIFALTVNCLLFIELGGRSLLITNPRDIPGMVKELSRYPFTAITGVNTLFNALLNNEEFTHLDFSTLRLSVGGGMPVQKAVAEKWETLTGKHLLEGYGLTECSPLVTGNPYDLKHYSGSIGLPVPSTDVRLRDDDGNDVELGKPGELWVRGPQVMLGYWQRPDATDDVLKDGWLATGDIATMDEDGFLRIVDRKKDMILVSGFNVYPNEIEEVVALHAKVLESAVIGVPNEVSGEAVKVFVVKNDASLTPEELLTHCRRYLTGYKVPKIVEFRDELPKSNVGKILRRELRDEEVKVGTTDAA.

Tyr213–Ala224 is a binding site for ATP.

This sequence belongs to the ATP-dependent AMP-binding enzyme family. Requires Mg(2+) as cofactor.

The protein localises to the membrane. It catalyses the reaction a long-chain fatty acid + ATP + CoA = a long-chain fatty acyl-CoA + AMP + diphosphate. It functions in the pathway lipid metabolism; fatty acid beta-oxidation. Its function is as follows. Catalyzes the esterification, concomitant with transport, of exogenous long-chain fatty acids into metabolically active CoA thioesters for subsequent degradation or incorporation into phospholipids. This Yersinia pestis protein is Long-chain-fatty-acid--CoA ligase (fadD).